A 66-amino-acid polypeptide reads, in one-letter code: Ornithorhynchus venom defensin-like peptide A (66 aa).

An N-terminal signal peptide occupies residues Met1–Ala22. The propeptide occupies Glu23–Pro24. Intrachain disulfides connect Cys33–Cys63, Cys40–Cys56, and Cys48–Cys64.

Produced by the crural gland and detected in venom from the spur located on each male hind leg. Is the only OvDLP that is expressed in venom gland alone.

Its subcellular location is the secreted. Its function is as follows. Does not show antimicrobial, myotoxic, hemolytic and cell-promoting activities. The sequence is that of Ornithorhynchus venom defensin-like peptide A from Ornithorhynchus anatinus (Duckbill platypus).